A 297-amino-acid polypeptide reads, in one-letter code: Acetyl-coenzyme A carboxylase carboxyl transferase subunit beta (297 aa).

The segment at 1-23 (MSWIERILGRTSSSSSSSKSKVP) is disordered. A CoA carboxyltransferase N-terminal domain is found at 26–295 (VWTKCTSCEQ…PFKTAELIVE (270 aa)). Zn(2+) is bound by residues cysteine 30, cysteine 33, cysteine 49, and cysteine 52. Residues 30 to 52 (CTSCEQVLYSEELKRNMHVCPKC) form a C4-type zinc finger.

It belongs to the AccD/PCCB family. In terms of assembly, acetyl-CoA carboxylase is a heterohexamer composed of biotin carboxyl carrier protein (AccB), biotin carboxylase (AccC) and two subunits each of ACCase subunit alpha (AccA) and ACCase subunit beta (AccD). It depends on Zn(2+) as a cofactor.

The protein resides in the cytoplasm. The enzyme catalyses N(6)-carboxybiotinyl-L-lysyl-[protein] + acetyl-CoA = N(6)-biotinyl-L-lysyl-[protein] + malonyl-CoA. The protein operates within lipid metabolism; malonyl-CoA biosynthesis; malonyl-CoA from acetyl-CoA: step 1/1. Its function is as follows. Component of the acetyl coenzyme A carboxylase (ACC) complex. Biotin carboxylase (BC) catalyzes the carboxylation of biotin on its carrier protein (BCCP) and then the CO(2) group is transferred by the transcarboxylase to acetyl-CoA to form malonyl-CoA. The polypeptide is Acetyl-coenzyme A carboxylase carboxyl transferase subunit beta (Actinobacillus pleuropneumoniae serotype 5b (strain L20)).